A 680-amino-acid chain; its full sequence is Trehalase (680 aa).

Residues 1–27 (MVLHAQPPDQSTETAREAKALAGATDG) are disordered.

This sequence belongs to the glycosyl hydrolase 15 family. As to quaternary structure, homomultimer. Phosphate is required as a cofactor.

The catalysed reaction is alpha,alpha-trehalose + H2O = alpha-D-glucose + beta-D-glucose. It functions in the pathway glycan degradation; trehalose degradation; D-glucose from alpha,alpha-trehalose: step 1/1. Its function is as follows. Catalyzes the hydrolysis of alpha,alpha-trehalose into two molecules of D-glucose. In Mycobacterium tuberculosis (strain ATCC 25618 / H37Rv), this protein is Trehalase.